The primary structure comprises 63 residues: Large ribosomal subunit protein uL29 (63 aa).

This sequence belongs to the universal ribosomal protein uL29 family.

This is Large ribosomal subunit protein uL29 from Pelagibacter ubique (strain HTCC1062).